The primary structure comprises 90 residues: UPF0223 protein lwe1035 (90 aa).

Belongs to the UPF0223 family.

The polypeptide is UPF0223 protein lwe1035 (Listeria welshimeri serovar 6b (strain ATCC 35897 / DSM 20650 / CCUG 15529 / CIP 8149 / NCTC 11857 / SLCC 5334 / V8)).